Consider the following 290-residue polypeptide: Putative OX-2 membrane glycoprotein homolog (290 aa).

The first 17 residues, 1-17, serve as a signal peptide directing secretion; it reads MSSLMLRLLPLLYIISA. Topologically, residues 18–267 are extracellular; that stretch reads HFVLHPETSP…SDETVFTWTV (250 aa). Residues 23 to 135 enclose the Ig-like V-type domain; sequence PETSPSLIYE…TFTVDNEKTS (113 aa). Cysteine 41 and cysteine 125 form a disulfide bridge. 4 N-linked (GlcNAc...) asparagine; by host glycosylation sites follow: asparagine 71, asparagine 104, asparagine 194, and asparagine 202. In terms of domain architecture, Ig-like C2-type spans 146 to 236; sequence PIVVLYFRYL…TNQKASALVT (91 aa). A helical transmembrane segment spans residues 268-288; sequence PLILILISVIVLLISVCIVAF. Residues 289-290 lie on the Cytoplasmic side of the membrane; it reads KS.

The protein resides in the membrane. The sequence is that of Putative OX-2 membrane glycoprotein homolog (U85) from Homo sapiens (Human).